The following is a 748-amino-acid chain: SNF-related serine/threonine-protein kinase (748 aa).

The Protein kinase domain occupies 16–269 (YDLDKTLGRG…LEEIESHPWL (254 aa)). Residues 22–30 (LGRGHFAVV) and lysine 45 contribute to the ATP site. Aspartate 139 acts as the Proton acceptor in catalysis. Position 162 is a phosphoserine (serine 162). Threonine 173 is modified (phosphothreonine; by LKB1). One can recognise a UBA domain in the interval 291 to 334 (SEEEHNSIIQRMVLGDIADRDAIVEALETNRYNHITATYFLLAE). Serine 362, serine 390, serine 482, serine 495, and serine 518 each carry phosphoserine. The interval 383 to 415 (SHATVPQSPARAGDNVLNGHRSKGLCDPAKKDE) is disordered. Residues 491 to 503 (EEGESDDEFDMDE) show a composition bias toward acidic residues. A disordered region spans residues 491-640 (EEGESDDEFD…SPSPASASAA (150 aa)). A compositionally biased stretch (basic residues) spans 522-532 (VHKRYHRRKSQ). Over residues 533 to 542 (GRGSSCSSSE) the composition is skewed to low complexity. Arginine 534 is modified (omega-N-methylarginine). Positions 549-558 (ESRRRLDKDS) are enriched in basic and acidic residues. 2 stretches are compositionally biased toward gly residues: residues 575 to 592 (GSEGDGGGQSKPSSGGGV) and 600 to 614 (QGTGGGSQGGSGGTP). Serine 606 carries the post-translational modification Phosphoserine. A compositionally biased stretch (low complexity) spans 629 to 640 (SSSPSPASASAA).

This sequence belongs to the protein kinase superfamily. CAMK Ser/Thr protein kinase family. It depends on Mg(2+) as a cofactor. Autophosphorylated. Phosphorylation on Thr-173 by STK11/LKB1 in complex with STE20-related adapter-alpha (STRADA) pseudo kinase and CAB39. As to expression, ubiquitously expressed in all tissues examined.

The protein resides in the nucleus. It carries out the reaction L-seryl-[protein] + ATP = O-phospho-L-seryl-[protein] + ADP + H(+). It catalyses the reaction L-threonyl-[protein] + ATP = O-phospho-L-threonyl-[protein] + ADP + H(+). Its activity is regulated as follows. Activated by phosphorylation on Thr-173. In terms of biological role, may play a role in hematopoietic cell proliferation or differentiation. Potential mediator of neuronal apoptosis. The sequence is that of SNF-related serine/threonine-protein kinase from Mus musculus (Mouse).